The following is a 1330-amino-acid chain: Pre-mRNA-splicing factor CWC22 homolog (1330 aa).

The segment at 1–377 (MGESDAESDS…AAKITERQRK (377 aa)) is disordered. A compositionally biased stretch (low complexity) spans 9-36 (DSSSNSSSSDTSSGSDSDARSESSSSES). Over residues 46–94 (QEESAKDAKKTDDTDRGEKRAKERDAGQDEQPTEQKKTPAAEPRSERQH) the composition is skewed to basic and acidic residues. The span at 99–113 (AGVEKQQEEAVAAAE) shows a compositional bias: low complexity. Positions 115 to 135 (ESEKLNEAKKVETPVQRKEEA) are enriched in basic and acidic residues. The segment covering 138-148 (SSVTKELNSPK) has biased composition (polar residues). The span at 149-166 (AQEENAARELEERRKDEE) shows a compositional bias: basic and acidic residues. A compositionally biased stretch (polar residues) spans 168–177 (PVTTNGSSKE). A phosphothreonine mark is found at Thr-191 and Thr-201. Composition is skewed to basic and acidic residues over residues 191 to 201 (TADHIEEGEIT) and 208 to 236 (LPTK…SPDG). Phosphoserine occurs at positions 219 and 221. A compositionally biased stretch (basic residues) spans 252–277 (SRRRRRSRSKGSRTRSRSKSPIRRRS). 2 stretches are compositionally biased toward basic and acidic residues: residues 278–307 (NSLE…EREK) and 316–325 (SSRRRDDSRE). The span at 355–366 (TETNADNETVTE) shows a compositional bias: low complexity. The MIF4G domain maps to 420–603 (KKSIHGYINK…EVLFQIRKDG (184 aa)). The disordered stretch occupies residues 660 to 697 (REILGSDDGSSSGSGSGSDSDSDSDGESGSDAEKKAEA). Low complexity predominate over residues 665–678 (SDDGSSSGSGSGSD). The span at 679–689 (SDSDSDGESGS) shows a compositional bias: acidic residues. In terms of domain architecture, MI spans 710-826 (ALRRTIYLTI…SWDVLECIQL (117 aa)). Residues 926-1330 (FRDGSAPAGN…RSSRRSKGRS (405 aa)) are disordered. The segment covering 941 to 951 (SSSSSSSSSSD) has biased composition (low complexity). The span at 952 to 963 (TDSEDSSEEDSS) shows a compositional bias: acidic residues. Low complexity predominate over residues 964 to 976 (SDSSSESSSSDSS). Residues 980 to 1012 (KKKRKRKDKDKKKSKKATKEKSKKTKNKKKKKK) show a composition bias toward basic residues. Residues 1013 to 1033 (AEKEQEKEKEKQRKSKKEKEK) show a composition bias toward basic and acidic residues. Positions 1034–1054 (DKKRKKEEKKAAKKKSKHRRK) are enriched in basic residues. A compositionally biased stretch (low complexity) spans 1072–1082 (SESSDSSNSSS). Positions 1089 to 1110 (PQAKIKRQEHVEKNKFRGRTQD) are enriched in basic and acidic residues. Thr-1108 is subject to Phosphothreonine. A phosphoserine mark is found at Ser-1111, Ser-1121, Ser-1180, and Ser-1181. 2 stretches are compositionally biased toward basic and acidic residues: residues 1133 to 1195 (RRRD…VAHD) and 1203 to 1320 (SRSY…SRRE). Tyr-1182 carries the post-translational modification Phosphotyrosine. Positions 1321-1330 (RSSRRSKGRS) are enriched in basic residues.

It belongs to the CWC22 family. In terms of assembly, component of the spliceosome C complex. Interacts with eIF4AIII.

It localises to the nucleus speckle. Required for pre-mRNA splicing and for exon-junction complex (EJC) assembly. Hinders eIF4AIII from non-specifically binding RNA and escorts it to the splicing machinery to promote EJC assembly on mature mRNAs. This Drosophila melanogaster (Fruit fly) protein is Pre-mRNA-splicing factor CWC22 homolog (ncm).